The primary structure comprises 160 residues: Putative UPF0479 protein YIL177W-A (160 aa).

The next 2 helical transmembrane spans lie at Ile-39–Gln-59 and Val-136–His-156.

The protein belongs to the UPF0479 family.

Its subcellular location is the membrane. This is Putative UPF0479 protein YIL177W-A from Saccharomyces cerevisiae (strain ATCC 204508 / S288c) (Baker's yeast).